Reading from the N-terminus, the 382-residue chain is Mannosyl phosphorylinositol ceramide synthase SUR1 (382 aa).

Residues 1–6 (MRKELK) are Cytoplasmic-facing. A helical membrane pass occupies residues 7–27 (YLICFNILLLLSIIYYTFDLL). Over 28 to 269 (TLCIDDTVKD…KALENHILSC (242 aa)) the chain is Extracellular. The helical transmembrane segment at 270–290 (VVTGFIFGFFILYGEFTFYCW) threads the bilayer. Residues 291–382 (LCSKNFSNLT…SKYSLGNNSS (92 aa)) lie on the Cytoplasmic side of the membrane. The residue at position 349 (S349) is a Phosphoserine.

Belongs to the glycosyltransferase 32 family. In terms of assembly, heterodimer of SUR1 and CSG2.

Its subcellular location is the membrane. The catalysed reaction is a 1D-myo-inositol-1-phospho-N-[(R)-2-hydroxy-very-long-chain fatty acyl]-(R)-4-hydroxysphingoid base + GDP-alpha-D-mannose = an alpha-D-mannosyl-(1&lt;-&gt;6)-1D-myo-inositol-1-phospho-N-[(R)-2-hydroxy-very-long-chain fatty acyl]-(R)-4-hydroxysphingoid base + GDP + H(+). In terms of biological role, involved in the synthesis of mannosyl phosphorylinositol ceramide. Catalyzes the addition of mannosyl to phosphorylinositol ceramide. Suppressor of RVS161 mutation. The polypeptide is Mannosyl phosphorylinositol ceramide synthase SUR1 (Saccharomyces cerevisiae (strain ATCC 204508 / S288c) (Baker's yeast)).